The primary structure comprises 203 residues: Small ribosomal subunit protein uS5 (203 aa).

A compositionally biased stretch (basic and acidic residues) spans 1–25; the sequence is MPGRTRRDGGSESGGKDRRDRRDGG. Residues 1–36 form a disordered region; sequence MPGRTRRDGGSESGGKDRRDRRDGGRGGAAQEKTPQ. One can recognise an S5 DRBM domain in the interval 36-99; it reads QFERVVTINR…EEAKKNFFRV (64 aa).

It belongs to the universal ribosomal protein uS5 family. As to quaternary structure, part of the 30S ribosomal subunit. Contacts proteins S4 and S8.

In terms of biological role, with S4 and S12 plays an important role in translational accuracy. Located at the back of the 30S subunit body where it stabilizes the conformation of the head with respect to the body. In Saccharopolyspora erythraea (strain ATCC 11635 / DSM 40517 / JCM 4748 / NBRC 13426 / NCIMB 8594 / NRRL 2338), this protein is Small ribosomal subunit protein uS5.